The chain runs to 404 residues: Glycosylated lysosomal membrane protein (404 aa).

A signal peptide spans 1 to 26; sequence MSGYEKPSRGWGFCALSPVLLSLLMA. The Lumenal segment spans residues 27 to 370; the sequence is APLGLLGEET…VDALSPLVLG (344 aa). N-linked (GlcNAc...) asparagine glycans are attached at residues Asn-63, Asn-132, Asn-157, Asn-185, and Asn-228. Residues 371–391 form a helical membrane-spanning segment; the sequence is IMAVALGAPALMLLAGGLFLL. The Cytoplasmic segment spans residues 392–404; that stretch reads LGRKRDSEYQSIN. The Lysosomal targeting motif motif lies at 400 to 404; that stretch reads YQSIN.

The protein belongs to the GLMP family. As to quaternary structure, interacts (via lumenal domain) with lysosomal protein MFSD1; the interaction starts while both proteins are still in the endoplasmic reticulum and is required for stabilization of MFSD1 in lysosomes but has no direct effect on its targeting to lysosomes or transporter activity. Highly N-glycosylated. N-glycosylation is essential for GLMP stability and for MFSD1 lysosomal localization.

It localises to the lysosome membrane. Its function is as follows. Required to protect lysosomal transporter MFSD1 from lysosomal proteolysis and for MFSD1 lysosomal localization. In Bos taurus (Bovine), this protein is Glycosylated lysosomal membrane protein.